A 962-amino-acid chain; its full sequence is Leucine--tRNA ligase (962 aa).

Residues 40-51 (PYPSGAGLHVGH) carry the 'HIGH' region motif. The 'KMSKS' region motif lies at 737 to 741 (KMSKS). Lysine 740 contacts ATP.

Belongs to the class-I aminoacyl-tRNA synthetase family.

The protein resides in the cytoplasm. It carries out the reaction tRNA(Leu) + L-leucine + ATP = L-leucyl-tRNA(Leu) + AMP + diphosphate. The sequence is that of Leucine--tRNA ligase from Flavobacterium psychrophilum (strain ATCC 49511 / DSM 21280 / CIP 103535 / JIP02/86).